A 301-amino-acid polypeptide reads, in one-letter code: Small ribosomal subunit protein uS2 (301 aa).

The disordered stretch occupies residues 237-301; it reads PTESWNDTVV…QDWSNSTSQW (65 aa). Residues 264-278 show a composition bias toward low complexity; the sequence is PQYAPAPQAAAAPVA.

It belongs to the universal ribosomal protein uS2 family. In terms of assembly, component of the small ribosomal subunit. Mature ribosomes consist of a small (40S) and a large (60S) subunit. The 40S subunit contains about 33 different proteins and 1 molecule of RNA (18S). The 60S subunit contains about 49 different proteins and 3 molecules of RNA (28S, 5.8S and 5S). Interacts with ribosomal protein S21.

It is found in the cytoplasm. Functionally, required for the assembly and/or stability of the 40S ribosomal subunit. Required for the processing of the 20S rRNA-precursor to mature 18S rRNA in a late step of the maturation of 40S ribosomal subunits. This is Small ribosomal subunit protein uS2 from Diaphorina citri (Asian citrus psyllid).